The sequence spans 400 residues: Elongation factor Tu (400 aa).

The 201-residue stretch at 10-210 folds into the tr-type G domain; the sequence is KPHINVGTIG…ALDEYIPEPK (201 aa). The interval 19–26 is G1; sequence GHVDHGKT. Residue 19-26 participates in GTP binding; the sequence is GHVDHGKT. Residue T26 participates in Mg(2+) binding. Positions 64–68 are G2; the sequence is GITIA. Residues 85 to 88 form a G3 region; sequence DCPG. Residues 85-89 and 140-143 contribute to the GTP site; these read DCPGH and NKAD. Residues 140–143 are G4; it reads NKAD. Residues 178–180 are G5; that stretch reads SAL.

This sequence belongs to the TRAFAC class translation factor GTPase superfamily. Classic translation factor GTPase family. EF-Tu/EF-1A subfamily. Monomer.

It localises to the cytoplasm. It carries out the reaction GTP + H2O = GDP + phosphate + H(+). Its function is as follows. GTP hydrolase that promotes the GTP-dependent binding of aminoacyl-tRNA to the A-site of ribosomes during protein biosynthesis. The chain is Elongation factor Tu from Rubrobacter xylanophilus (strain DSM 9941 / JCM 11954 / NBRC 16129 / PRD-1).